The sequence spans 147 residues: Sec-independent protein translocase protein TatB (147 aa).

A helical transmembrane segment spans residues 1 to 21 (MFDISFSEILVIAAVALIVIG). Residues 67 to 88 (EETGRSIENSVHTELDKFRETV) show a composition bias toward basic and acidic residues. Residues 67 to 147 (EETGRSIENS…GVNRERETAE (81 aa)) are disordered. A compositionally biased stretch (low complexity) spans 103–117 (APAGESSPPQNSSPA).

It belongs to the TatB family. As to quaternary structure, the Tat system comprises two distinct complexes: a TatABC complex, containing multiple copies of TatA, TatB and TatC subunits, and a separate TatA complex, containing only TatA subunits. Substrates initially bind to the TatABC complex, which probably triggers association of the separate TatA complex to form the active translocon.

The protein resides in the cell inner membrane. Its function is as follows. Part of the twin-arginine translocation (Tat) system that transports large folded proteins containing a characteristic twin-arginine motif in their signal peptide across membranes. Together with TatC, TatB is part of a receptor directly interacting with Tat signal peptides. TatB may form an oligomeric binding site that transiently accommodates folded Tat precursor proteins before their translocation. This chain is Sec-independent protein translocase protein TatB, found in Nitrosospira multiformis (strain ATCC 25196 / NCIMB 11849 / C 71).